A 274-amino-acid polypeptide reads, in one-letter code: Orotidine 5'-phosphate decarboxylase (274 aa).

Lys95 (proton donor) is an active-site residue.

This sequence belongs to the OMP decarboxylase family. Type 2 subfamily.

The catalysed reaction is orotidine 5'-phosphate + H(+) = UMP + CO2. It functions in the pathway pyrimidine metabolism; UMP biosynthesis via de novo pathway; UMP from orotate: step 2/2. The sequence is that of Orotidine 5'-phosphate decarboxylase from Paracidovorax citrulli (strain AAC00-1) (Acidovorax citrulli).